The following is a 630-amino-acid chain: A-type voltage-gated potassium channel KCND2 (630 aa).

Residues 1 to 184 (MAAGVAAWLP…FENPHTSTMA (184 aa)) lie on the Cytoplasmic side of the membrane. Residues 2 to 20 (AAGVAAWLPFARAAAIGWM) are interaction with KCNIP1, KCNIP2, and other family members. Thr38 carries the phosphothreonine modification. The interval 71-90 (ERDFFYHPETQQYFFDRDPD) is interaction with KCNIP1. Zn(2+) is bound by residues His105, Cys111, Cys132, and Cys133. Residues 185–206 (LVFYYVTGFFIAVSVIANVVET) form a helical membrane-spanning segment. Residues 207 to 226 (VPCGSSPGHIKELPCGERYA) lie on the Extracellular side of the membrane. A helical membrane pass occupies residues 227-249 (VAFFCLDTACVMIFTVEYLLRLA). Residues 250–256 (AAPSRYR) lie on the Cytoplasmic side of the membrane. A helical membrane pass occupies residues 257 to 281 (FVRSVMSIIDVVAILPYYIGLVMTD). The Extracellular portion of the chain corresponds to 282 to 287 (NEDVSG). A helical; Voltage-sensor membrane pass occupies residues 288 to 307 (AFVTLRVFRVFRIFKFSRHS). At 308–321 (QGLRILGYTLKSCA) the chain is on the cytoplasmic side. The segment at 308–321 (QGLRILGYTLKSCA) is S4-S5 linker. A helical transmembrane segment spans residues 322–345 (SELGFLLFSLTMAIIIFATVMFYA). Residues 346–357 (EKGSSASKFTSI) lie on the Extracellular side of the membrane. Residues 358 to 369 (PAAFWYTIVTMT) constitute an intramembrane region (helical). K(+)-binding residues include Thr370, Leu371, Gly372, and Tyr373. The Selectivity filter signature appears at 370-375 (TLGYGD). Residues 370–377 (TLGYGDMV) lie within the membrane without spanning it. The Extracellular segment spans residues 378 to 380 (PKT). The helical transmembrane segment at 381–403 (IAGKIFGSICSLSGVLVIALPVP) threads the bilayer. The Cytoplasmic portion of the chain corresponds to 404 to 630 (VIVSNFSRIY…GGNIVRVSAL (227 aa)). Ser438 is subject to Phosphoserine. Positions 474–489 (FETQHHHLLHCLEKTT) are required for dendritic targeting. Residues 474-630 (FETQHHHLLH…GGNIVRVSAL (157 aa)) form an important for normal channel activation and inactivation, for interaction with KCNIP2, and probably other family members as well region. Residues Ser548, Ser552, Ser572, and Ser575 each carry the phosphoserine modification. The segment at 600–623 (IPTPPVTTPEGDDRPESPEYSGGN) is disordered. Phosphothreonine occurs at positions 602 and 607. Position 616 is a phosphoserine (Ser616). Residues 627–630 (VSAL) carry the PDZ-binding motif.

It belongs to the potassium channel family. D (Shal) (TC 1.A.1.2) subfamily. Kv4.2/KCND2 sub-subfamily. As to quaternary structure, homotetramer or heterotetramer with KCND1 or KCND3. Associates with the regulatory subunits KCNIP1, KCNIP2, KCNIP3 and KCNIP4. Interacts with DPP6, DPP10, DLG4 and DLG1. In vivo, probably exists as heteromeric complex containing variable proportions of KCND1, KCND2, KCND3, KCNIP1, KCNIP2, KCNIP3, KCNIP4, DPP6 and DPP10. The tetrameric channel can associate with up to four regulatory subunits, such as KCNIP2 or KCNIP4. Interaction with KCNIP3 promotes tetramerization and formation of a functional potassium channel. Interaction with four KCNIP4 chains does not reduce interaction with DPP10. Probably part of a complex consisting of KCNIP1, KCNIP2 isoform 3 and KCND2. Interacts with FLNA and FLNC. Interacts with NCS1/FREQ. Identified in a complex with cAMP-dependent protein kinase (PKA), CAV3, AKAP6 and KCND3 in cardiac myocytes. Interacts (via S1 and S2 helices) with DPP6; this interaction stabilizes the conformation of the S1-S2 helices and facilitates S4 conformational change, including S4 sliding up and down, thereby accelerating activation, inactivation, and recovery. Phosphorylation at Ser-438 in response to MAPK activation is increased in stimulated dendrites. Interaction with KCNIP2 and DPP6 propomtes phosphorylation by PKA at Ser-552. Phosphorylation at Ser-552 has no effect on interaction with KCNIP3, but is required for the regulation of channel activity by KCNIP3. Phosphorylation at Ser-552 leads to KCND2 internalization. Phosphorylated by MAPK in response to signaling via the metabotropic glutamate receptor GRM5. Phosphorylation at Ser-616 is required for the down-regulation of neuronal A-type currents in response to signaling via GRM5. Detected in brain frontal cortex.

It is found in the cell membrane. The protein localises to the cell projection. The protein resides in the dendrite. Its subcellular location is the synapse. It localises to the perikaryon. It is found in the postsynaptic cell membrane. The protein localises to the dendritic spine. The protein resides in the sarcolemma. Its subcellular location is the cell junction. It localises to the membrane. It is found in the caveola. The catalysed reaction is K(+)(in) = K(+)(out). Voltage-gated potassium channel that mediates transmembrane potassium transport in excitable membranes, primarily in the brain. Mediates the major part of the dendritic A-type current I(SA) in brain neurons. This current is activated at membrane potentials that are below the threshold for action potentials. It regulates neuronal excitability, prolongs the latency before the first spike in a series of action potentials, regulates the frequency of repetitive action potential firing, shortens the duration of action potentials and regulates the back-propagation of action potentials from the neuronal cell body to the dendrites. Contributes to the regulation of the circadian rhythm of action potential firing in suprachiasmatic nucleus neurons, which regulates the circadian rhythm of locomotor activity. Functions downstream of the metabotropic glutamate receptor GRM5 and plays a role in neuronal excitability and in nociception mediated by activation of GRM5. Mediates the transient outward current I(to) in rodent heart left ventricle apex cells, but not in human heart, where this current is mediated by another family member. Forms tetrameric potassium-selective channels through which potassium ions pass in accordance with their electrochemical gradient. The channel alternates between opened and closed conformations in response to the voltage difference across the membrane. Can form functional homotetrameric channels and heterotetrameric channels that contain variable proportions of KCND2 and KCND3; channel properties depend on the type of pore-forming alpha subunits that are part of the channel. In vivo, membranes probably contain a mixture of heteromeric potassium channel complexes. Interaction with specific isoforms of the regulatory subunits KCNIP1, KCNIP2, KCNIP3 or KCNIP4 strongly increases expression at the cell surface and thereby increases channel activity; it modulates the kinetics of channel activation and inactivation, shifts the threshold for channel activation to more negative voltage values, shifts the threshold for inactivation to less negative voltages and accelerates recovery after inactivation. Likewise, interaction with DPP6 or DPP10 promotes expression at the cell membrane and regulates both channel characteristics and activity. Upon depolarization, the channel goes from a resting closed state (C state) to an activated but non-conducting state (C* state), from there, the channel may either inactivate (I state) or open (O state). This chain is A-type voltage-gated potassium channel KCND2, found in Oryctolagus cuniculus (Rabbit).